The sequence spans 336 residues: Ribosomal RNA large subunit methyltransferase F (336 aa).

Basic residues predominate over residues 212-231; it reads HHLERSRGKPTGKGVRRVRS. The tract at residues 212–234 is disordered; that stretch reads HHLERSRGKPTGKGVRRVRSGRM.

The protein belongs to the methyltransferase superfamily. METTL16/RlmF family.

It localises to the cytoplasm. It catalyses the reaction adenosine(1618) in 23S rRNA + S-adenosyl-L-methionine = N(6)-methyladenosine(1618) in 23S rRNA + S-adenosyl-L-homocysteine + H(+). Specifically methylates the adenine in position 1618 of 23S rRNA. The protein is Ribosomal RNA large subunit methyltransferase F of Methylobacillus flagellatus (strain ATCC 51484 / DSM 6875 / VKM B-1610 / KT).